The following is an 81-amino-acid chain: RNA-binding protein Hfq (81 aa).

In terms of domain architecture, Sm spans 11-71 (DIFLNNARKN…ISTITPTKPI (61 aa)).

This sequence belongs to the Hfq family. As to quaternary structure, homohexamer.

Its function is as follows. RNA chaperone that binds small regulatory RNA (sRNAs) and mRNAs to facilitate mRNA translational regulation in response to envelope stress, environmental stress and changes in metabolite concentrations. Also binds with high specificity to tRNAs. This is RNA-binding protein Hfq from Clostridium beijerinckii (strain ATCC 51743 / NCIMB 8052) (Clostridium acetobutylicum).